We begin with the raw amino-acid sequence, 593 residues long: Vicilin Jug r 2.0101 (593 aa).

2 stretches are compositionally biased toward basic and acidic residues: residues 46-76 and 97-118; these read LEED…EQRY and RRCE…DRQD. Residues 46 to 123 form a disordered region; the sequence is LEEDQRSQEE…RDRQDPQQQY (78 aa). IgE-binding regions lie at residues 49-58, 76-85, and 101-110; these read DQRSQEERER, YEQCQQQCER, and QRRQQEERER. Residues 140 to 149 are igE-binding. Involved in cross-reactivity with peanut allergen Ara h 2; able to inhibit binding of IgE from a peanut-allergic patient to Ara h 2; the sequence is QRQCQQRCER. Positions 150 to 178 are enriched in basic and acidic residues; the sequence is QYKEQQGRERGPEASPRRESRGREEEQQR. The disordered stretch occupies residues 150–184; that stretch reads QYKEQQGRERGPEASPRRESRGREEEQQRHNPYYF. 2 T-cell epitope; recognized by the HLA-DRB1-restricted CD4(+) T-cells regions span residues 175–193 and 206–225; these read EQQR…RSRH and FTER…VILD. Tyr182 contributes to the Cu cation binding site. Cupin type-1 domains follow at residues 187–341 and 386–556; these read QSIR…DRLE and ISLK…EEIE. A glycan (N-linked (GlcNAc...) asparagine) is linked at Asn229. 6 T-cell epitope; recognized by the HLA-DRB1-restricted CD4(+) T-cells regions span residues 246 to 265, 302 to 321, 318 to 337, 382 to 401, 414 to 433, and 438 to 457; these read TRGR…SFNL, PGQF…QSYL, QSYL…NTPR, SGGP…QFGQ, QEMD…MMVP, and KATV…MACP. Cu cation contacts are provided by Cys456 and His458. An igE-binding region spans residues 463–470; the sequence is SYEGQGRR. Positions 478-497 are T-cell epitope; recognized by the HLA-DRB1-restricted CD4(+) T-cells; sequence TGRFQKVTARLARGDIFVIP. His500 is a binding site for Cu cation. Positions 529 to 556 form a coiled coil; it reads LAGQNNIINQLEREAKELSFNMPREEIE. An igE-binding region spans residues 541-555; the sequence is REAKELSFNMPREEI. T-cell epitope; recognized by the HLA-DRB1-restricted CD4(+) T-cells stretches follow at residues 542-561 and 558-577; these read EAKE…IFES and IFES…SRRG.

This sequence belongs to the 7S seed storage protein family. Proteolytically cleaved. As to expression, expressed in seed (at protein level).

Functionally, seed storage protein. The sequence is that of Vicilin Jug r 2.0101 from Juglans regia (English walnut).